The following is a 205-amino-acid chain: Small ribosomal subunit protein uS4 (205 aa).

Residues 1 to 16 (MSKRESSKYKIDRRMG) show a composition bias toward basic and acidic residues. The disordered stretch occupies residues 1 to 46 (MSKRESSKYKIDRRMGENIWGRPKSPVNRREYGPGQHGQRRKGKLS). The S4 RNA-binding domain maps to 94-157 (SRLDAIVYRA…KQLVIVLEAV (64 aa)).

Belongs to the universal ribosomal protein uS4 family. Part of the 30S ribosomal subunit. Contacts protein S5. The interaction surface between S4 and S5 is involved in control of translational fidelity.

In terms of biological role, one of the primary rRNA binding proteins, it binds directly to 16S rRNA where it nucleates assembly of the body of the 30S subunit. Functionally, with S5 and S12 plays an important role in translational accuracy. This chain is Small ribosomal subunit protein uS4, found in Rhizobium johnstonii (strain DSM 114642 / LMG 32736 / 3841) (Rhizobium leguminosarum bv. viciae).